A 73-amino-acid polypeptide reads, in one-letter code: Toxin Td9 (73 aa).

Positions 1–7 (IGMVAEC) are cleaved as a signal peptide. Residues 8 to 70 (KDGYLVGDDG…IWNSATNSCG (63 aa)) enclose the LCN-type CS-alpha/beta domain. Disulfide bonds link C18–C69, C22–C44, C30–C50, and C34–C52. K71 is modified (lysine amide).

This sequence belongs to the long (4 C-C) scorpion toxin superfamily. Sodium channel inhibitor family. Beta subfamily. Expressed by the venom gland.

It is found in the secreted. In terms of biological role, beta toxins bind voltage-independently at site-4 of sodium channels (Nav) and shift the voltage of activation toward more negative potentials thereby affecting sodium channel activation and promoting spontaneous and repetitive firing. In Tityus discrepans (Venezuelan scorpion), this protein is Toxin Td9.